The primary structure comprises 759 residues: Serine/threonine-protein kinase HRK1 (759 aa).

Residues 1 to 32 (MPNLLSRNPFHGHHNDHHHDRENSSNNPPQLI) form a disordered region. S37 is subject to Phosphoserine. The segment at 45–162 (KQSNDSLRSE…PPPSKSTSTV (118 aa)) is disordered. The segment covering 59 to 97 (SMKSTTTTTNYTTTNLNNNTHSHSNATSISTNNYNNNYE) has biased composition (low complexity). The segment covering 113 to 122 (SPASPKQTHS) has biased composition (polar residues). Residues 215–722 (GKLGKLLGSG…LDDIFNDEWF (508 aa)) enclose the Protein kinase domain. ATP is bound by residues 221–229 (LGSGAGGSV) and K244. D340 acts as the Proton acceptor in catalysis. Phosphoserine occurs at positions 382 and 472. The segment covering 493 to 502 (PNTPASIQGK) has biased composition (polar residues). Disordered stretches follow at residues 493 to 578 (PNTP…GRVD) and 614 to 682 (AANA…KIIH). A Phosphothreonine modification is found at T495. A Phosphoserine modification is found at S498. The span at 510–519 (VEEETEENKE) shows a compositional bias: acidic residues. The span at 520-547 (DDSNNDKESTPDNDKESTIDIKISKNEN) shows a compositional bias: basic and acidic residues. Positions 614–646 (AANANPDMVPQNNPQQQQQQQQQQQQQQQQQQQ) are enriched in low complexity. Polar residues predominate over residues 663–672 (ASDNKSSQQH).

Belongs to the protein kinase superfamily. Ser/Thr protein kinase family.

Its subcellular location is the cytoplasm. It carries out the reaction L-seryl-[protein] + ATP = O-phospho-L-seryl-[protein] + ADP + H(+). The catalysed reaction is L-threonyl-[protein] + ATP = O-phospho-L-threonyl-[protein] + ADP + H(+). Functionally, involved in regulating the activity of the plasma membrane proton pump PMA1. The chain is Serine/threonine-protein kinase HRK1 (HRK1) from Saccharomyces cerevisiae (strain ATCC 204508 / S288c) (Baker's yeast).